Consider the following 283-residue polypeptide: Putative 4-diphosphocytidyl-2-C-methyl-D-erythritol kinase (283 aa).

K10 is a catalytic residue. 94-104 (PVCAGLGGGST) lines the ATP pocket. Residue D136 is part of the active site.

Belongs to the GHMP kinase family. IspE subfamily.

The catalysed reaction is 4-CDP-2-C-methyl-D-erythritol + ATP = 4-CDP-2-C-methyl-D-erythritol 2-phosphate + ADP + H(+). Functionally, catalyzes the phosphorylation of the position 2 hydroxy group of 4-diphosphocytidyl-2C-methyl-D-erythritol. The polypeptide is Putative 4-diphosphocytidyl-2-C-methyl-D-erythritol kinase (Streptococcus agalactiae serotype III (strain NEM316)).